Consider the following 774-residue polypeptide: Transforming acidic coiled-coil-containing protein 1 (774 aa).

Position 2 is an N-acetylalanine (alanine 2). The tract at residues 2 to 56 (AFSPWQILSPVQWAKWTWSAVRGSGAGEDEAGGPEGDPEEEEDSQAETKSLSFSS) is interaction with LSM7 and SNRPG. Residues serine 4, serine 10, and serine 45 each carry the phosphoserine modification. The segment at 21–142 (AVRGSGAGED…VKDVRGKAEH (122 aa)) is disordered. Acidic residues predominate over residues 28–46 (GEDEAGGPEGDPEEEEDSQ). A compositionally biased stretch (polar residues) spans 48 to 61 (ETKSLSFSSDSEGN). Positions 88 to 99 (PEAKPQESREAD) are enriched in basic and acidic residues. Polar residues predominate over residues 113-128 (DTCSRSSENEAPQATV). Residues 131-142 (HPVKDVRGKAEH) show a composition bias toward basic and acidic residues. Serine 148 and serine 154 each carry phosphoserine. The interval 153–255 (FSIETRNCTD…PEMLMEGSPL (103 aa)) is interaction with TDRD7. The interval 207–424 (EAFTEASLKT…NNINTDDSGD (218 aa)) is interaction with YEATS4. The interval 214 to 428 (LKTGGPCPEP…TDDSGDPCKP (215 aa)) is disordered. SPAZ domains lie at 216 to 294 (TGGP…TAGV) and 354 to 504 (SKPV…TDEE). Serine 228 is modified (phosphoserine; by AURKC). The span at 228-241 (SKLRKPKPVSLRKK) shows a compositional bias: basic residues. Serine 376 and serine 401 each carry phosphoserine. The span at 397 to 407 (ILQNSPPLSSK) shows a compositional bias: polar residues. Positions 452-468 (PKKAKSRLITSGCKVKK) match the Bipartite nuclear localization signal motif. Phosphoserine occurs at positions 480 and 560. The stretch at 579–774 (IREEIITKEI…ELIAKLGKTD (196 aa)) forms a coiled coil. Positions 670–774 (VLEGFKKNEE…ELIAKLGKTD (105 aa)) are interaction with CH-TOG.

It belongs to the TACC family. Interacts with CH-TOG and YEATS4. Interacts with the AURKA and AURKB and AURKC. Interacts with LSM7, TDRD7 and SNRPG. Interacts with GCN5L2 and PCAF. Interacts with the thyroid hormone receptors THRB and THRA, predominantly with isoform alpha-2. The interaction with THRA isoform alpha-1 and THRB is decreased in the presence of thyroid hormone T3. Interacts with RARA in the nucleus. Also interacts with other nuclear receptors, including ESR1, NR3C1, PPARG and RXRA, preferentially in the absence of their hormonal ligands.

The protein localises to the cytoplasm. The protein resides in the nucleus. Its subcellular location is the cytoskeleton. It is found in the microtubule organizing center. It localises to the centrosome. The protein localises to the midbody. Involved in transcription regulation induced by nuclear receptors, including in T3 thyroid hormone and all-trans retinoic acid pathways. Might promote the nuclear localization of the receptors. Likely involved in the processes that promote cell division prior to the formation of differentiated tissues. The protein is Transforming acidic coiled-coil-containing protein 1 (Tacc1) of Mus musculus (Mouse).